The sequence spans 651 residues: MTLEITRSELIKSKLIDAPERCGVYRMFDVNKQVIYVGKAKNLKKRLTHYIKSDLDNKTLRMIANTCFLEYSITNSEVEALLLEAQLIKKFQPKFNILLKDDKSFPFIKLRLDHDFPQLLKYRGKTLNDGKCFGPFASATEVNTTLTELQKIFKLRSCTDNYFNSRTRPCMQYEIKRCYAPCVGKINKEDYRDLVAQVKDFLQGRTKALQENLSKKMEELSSQMRFEEAAEIRDRIKALSYVQLKSCVSDIVKDADIIVVVEKNGHYCVEVFLYRAWQACGNIPYFPTSTENSTKEEVLEYFLLQFYQKQQVPAEIIINHEINDKENMIEAIKKINNITKLNIIIPISGGKAKLVQNAAIKALFSLEQYLKKFVKNQEIMLEIKALFGLHEIPERIEIYDNSHIQGKFAVGVVVVVGKAGFDKKEYRVFSLSSCDASLSSHAYPFSPRNLIAGSSTLTNPMDPVVRSREDDTSSTHNYAVGDDYEMLRQVLIRRLTRLKNEPHKLPSLMIIDGGKGHLGIVKEVMDKFAMHIPFVCMSKGVDRNAGIEQFHMTGKEVFTLDTNLPIMKYLQILRDEAHNFAIKNHRLGRSRAIKISSLDNIEGVGETRKKALLHYFGSYKAVCDATIDELTKVNGINKSLAAMIFRTLHKR.

Residues 20–97 enclose the GIY-YIG domain; the sequence is ERCGVYRMFD…IKKFQPKFNI (78 aa). The 36-residue stretch at 207 to 242 folds into the UVR domain; that stretch reads KALQENLSKKMEELSSQMRFEEAAEIRDRIKALSYV.

This sequence belongs to the UvrC family. Interacts with UvrB in an incision complex.

It localises to the cytoplasm. Its function is as follows. The UvrABC repair system catalyzes the recognition and processing of DNA lesions. UvrC both incises the 5' and 3' sides of the lesion. The N-terminal half is responsible for the 3' incision and the C-terminal half is responsible for the 5' incision. The sequence is that of UvrABC system protein C from Rickettsia akari (strain Hartford).